The sequence spans 571 residues: Phototropic-responsive NPH3 family protein NPY1 (571 aa).

The BTB domain occupies 29–97; it reads SDVTIHVGEV…CYGMTVTLNA (69 aa). The 259-residue stretch at 210-468 folds into the NPH3 domain; the sequence is DWWVEDVCEL…VQVLYFEQLR (259 aa). Tyr409 carries the post-translational modification Phosphotyrosine. The segment at 475–571 is disordered; the sequence is ASVAASSHSP…SSRRRRHSIS (97 aa). Residues 484–504 show a composition bias toward basic and acidic residues; sequence PVEKTEENKGEEATKKVELSK. Over residues 540-562 the composition is skewed to low complexity; the sequence is SNKSSEVSSGSSQSPPAKSSSSS.

The protein belongs to the NPH3 family. In terms of assembly, component of a complex made of PINs (e.g. PIN1 and PIN2), MAB4/MELs (e.g. NPY1/MAB4 and NPY5/MEL1) and AGC kinases (e.g. D6PK and PID) at the plasma membrane. Binds directly to PIN2 and PID. As to expression, accumulates in organ primordia such as cotyledons, leaves and floral organs. Expressed mainly in the apical regions of embryos including cotyledon tips and the apical meristem. Induced by the transcription factor ARF5/MP at the periphery of inflorescence meristems. Highly expressed in primary root tips and radicles.

It is found in the late endosome. Its subcellular location is the cell membrane. The protein localises to the cytoplasm. The protein resides in the cytosol. The protein operates within protein modification; protein ubiquitination. Its function is as follows. May act as a substrate-specific adapter of an E3 ubiquitin-protein ligase complex (CUL3-RBX1-BTB) which mediates the ubiquitination and subsequent proteasomal degradation of target proteins. Coregulates with PID the auxin-mediated plant organogenesis. Regulates basipetal PIN proteins (e.g. PIN1) polarization to establish inward auxin transport from the L1 surface of incipient organ primordia; this process is essential for the progression of flower organs development. Recruited to the plasma membrane by PINs (e.g. PIN1 and PIN2) and, in concert with AGC kinases-mediated (e.g. D6PK and PID) PINs phosphorylation, maintains their cell polarity (apical or basal) through limiting lateral diffusion-based escape. Induces auxin response in inner cell layers through a shift in PIN1 localization. Influences cotyledon development by regulating auxin distribution mainly in the protodermal cell layer. May play an essential role in root gravitropic responses. The protein is Phototropic-responsive NPH3 family protein NPY1 of Arabidopsis thaliana (Mouse-ear cress).